The sequence spans 48 residues: Large ribosomal subunit protein bL32 (48 aa).

The tract at residues 28-48 (VKDKDGSWKMPHRINKTTGEY) is disordered.

The protein belongs to the bacterial ribosomal protein bL32 family.

This is Large ribosomal subunit protein bL32 from Campylobacter concisus (strain 13826).